The chain runs to 203 residues: Chemotactic transduction protein ChpE (203 aa).

5 consecutive transmembrane segments (helical) span residues 3 to 23 (AIFL…GAVF), 46 to 66 (LIGD…LLGY), 69 to 89 (VRIP…VQGL), 123 to 143 (NVVY…GTPN), and 149 to 169 (VFFA…AALV).

The protein belongs to the Rht family.

The protein localises to the cell membrane. The protein is Chemotactic transduction protein ChpE (chpE) of Pseudomonas aeruginosa (strain ATCC 15692 / DSM 22644 / CIP 104116 / JCM 14847 / LMG 12228 / 1C / PRS 101 / PAO1).